We begin with the raw amino-acid sequence, 327 residues long: Germination protease (327 aa).

The propeptide occupies 1–7 (MNSVRTD).

This sequence belongs to the peptidase A25 family. Homotetramer. Autoproteolytically processed. The inactive tetrameric zymogen termed p46 autoprocesses to a smaller form termed p41, which is active only during spore germination.

It carries out the reaction Endopeptidase action with P4 Glu or Asp, P1 preferably Glu &gt; Asp, P1' hydrophobic and P2' Ala.. Initiates the rapid degradation of small, acid-soluble proteins during spore germination. This chain is Germination protease, found in Clostridium acetobutylicum (strain ATCC 824 / DSM 792 / JCM 1419 / IAM 19013 / LMG 5710 / NBRC 13948 / NRRL B-527 / VKM B-1787 / 2291 / W).